Consider the following 782-residue polypeptide: E3 UFM1-protein ligase 1 homolog (782 aa).

The disordered stretch occupies residues 405 to 478; it reads VSTQELEDDG…TRGGGGASKK (74 aa).

It belongs to the UFL1 family.

In terms of biological role, E3 UFM1-protein ligase that mediates ufmylation of target proteins. This chain is E3 UFM1-protein ligase 1 homolog, found in Drosophila simulans (Fruit fly).